The primary structure comprises 68 residues: UPF0435 protein SA1696 (68 aa).

This sequence belongs to the UPF0435 family.

The polypeptide is UPF0435 protein SA1696 (Staphylococcus aureus (strain N315)).